Reading from the N-terminus, the 391-residue chain is MRKLFTSESVTEGHPDKICDQISDAVLDAILDKDPNGRVACETAVTTGMVMVMGEISTKCYVDIPKLVRETIRGIGYDRAKYGFDCETCSVITSIDEQSVDIAMGVDEALESKKGEMDKLDAVGAGDQGMMFGFATNETKEYMPMPIEMAHKLSRRLSEVRKNGTLPYLRPDGKTQVTVEYENGKPVRIDAIVISTQHGPEVYLEQIEKDIKEHVIKVIVPSELLDENTKYFINPTGRFVVGGPQGDSGLTGRKIIVDTYGGYGRHGGGAFSGKDPTKVDRSAAYAARWVAKNLVAAGVADKLEIQLAYAIGVAKPVSISVDTFGTGKMTDEEIVSIVNKVFDLRPGAIIRDLDLRRPIYKQVAAYGHFGRTDIDVPWERLDKVEEIKKHI.

Residue H14 participates in ATP binding. D16 is a binding site for Mg(2+). K(+) is bound at residue E42. L-methionine contacts are provided by E55 and Q98. A flexible loop region spans residues Q98 to E108. ATP-binding positions include D172 to K174, R238 to F239, D247, R253 to K254, A270, and K274. D247 is a binding site for L-methionine. K278 provides a ligand contact to L-methionine.

It belongs to the AdoMet synthase family. As to quaternary structure, homotetramer; dimer of dimers. Requires Mg(2+) as cofactor. The cofactor is K(+).

Its subcellular location is the cytoplasm. It catalyses the reaction L-methionine + ATP + H2O = S-adenosyl-L-methionine + phosphate + diphosphate. Its pathway is amino-acid biosynthesis; S-adenosyl-L-methionine biosynthesis; S-adenosyl-L-methionine from L-methionine: step 1/1. Catalyzes the formation of S-adenosylmethionine (AdoMet) from methionine and ATP. The overall synthetic reaction is composed of two sequential steps, AdoMet formation and the subsequent tripolyphosphate hydrolysis which occurs prior to release of AdoMet from the enzyme. The polypeptide is S-adenosylmethionine synthase (Clostridium botulinum (strain Hall / ATCC 3502 / NCTC 13319 / Type A)).